Consider the following 512-residue polypeptide: ETS translocation variant 3 (512 aa).

A DNA-binding region (ETS) is located at residues 35–116; sequence IQLWHFILEL…KGKRFTYKFN (82 aa). A disordered region spans residues 136–222; it reads VPQSAPPVPT…NAIGGGGIGH (87 aa). Phosphoserine occurs at positions 139, 159, and 315. Positions 158–184 are enriched in polar residues; the sequence is HSPTNDVQPGRFSASSLTASGQESSNG. Residues 336–512 are disordered; it reads PEESTQFSIK…QGLATAAADA (177 aa). Over residues 380–406 the composition is skewed to basic and acidic residues; sequence IKVEPASEKDPESLRQSAREKEEHTQE. Lys381 is covalently cross-linked (Glycyl lysine isopeptide (Lys-Gly) (interchain with G-Cter in SUMO2)). Lys388 bears the N6-acetyllysine; alternate mark. A Glycyl lysine isopeptide (Lys-Gly) (interchain with G-Cter in SUMO2); alternate cross-link involves residue Lys388. Positions 443 to 452 are enriched in acidic residues; sequence EPLEVTEDIE. Composition is skewed to basic and acidic residues over residues 453-468 and 479-491; these read DRPGKEPSAPEKKEDA and RWNDDPEARELSK.

The protein belongs to the ETS family.

The protein localises to the nucleus. Functionally, transcriptional repressor that contribute to growth arrest during terminal macrophage differentiation by repressing target genes involved in Ras-dependent proliferation. Represses MMP1 promoter activity. The sequence is that of ETS translocation variant 3 (ETV3) from Pan paniscus (Pygmy chimpanzee).